The primary structure comprises 454 residues: Cell division cycle-associated 7-like protein (454 aa).

Residues Ile-9–Val-33 carry the Integrase domain-binding motif 1 (IBM1) motif. Phosphoserine is present on Ser-21. The short motif at Phe-65–Asp-91 is the Integrase domain-binding motif 2 (IBM2) element. Thr-77 bears the Phosphothreonine mark. At Ser-79 the chain carries Phosphoserine. A phosphothreonine mark is found at Thr-81 and Thr-88. 2 disordered regions span residues Val-103–Ser-169 and Gln-188–Ala-213. A phosphoserine mark is found at Ser-105, Ser-108, Ser-117, Ser-138, Ser-139, Ser-162, Ser-195, and Ser-197. A compositionally biased stretch (acidic residues) spans Ser-117–Asp-126. The interval Ala-213–Leu-235 is MYC-binding. Residues Lys-222 and Lys-225 each participate in a glycyl lysine isopeptide (Lys-Gly) (interchain with G-Cter in SUMO2) cross-link. Ser-261 carries the phosphoserine modification.

Interacts with MYC. Interacts (via IBM motifs) with PSIP1 (via IBD domain); phosphorylation increases its affinity for PSIP1. In terms of processing, phosphorylation increases its interaction with PSIP1. In terms of tissue distribution, ubiquitous. Overexpressed in medulloblastoma.

It localises to the cytoplasm. The protein resides in the nucleus. Plays a role in transcriptional regulation as a repressor that inhibits monoamine oxidase A (MAOA) activity and gene expression by binding to the promoter. Plays an important oncogenic role in mediating the full transforming effect of MYC in medulloblastoma cells. Involved in apoptotic signaling pathways; May act downstream of P38-kinase and BCL-2, but upstream of CASP3/caspase-3 as well as CCND1/cyclin D1 and E2F1. This is Cell division cycle-associated 7-like protein (CDCA7L) from Homo sapiens (Human).